Here is a 149-residue protein sequence, read N- to C-terminus: Early lymphoid activation gene protein (149 aa).

Expressed in heart, kidney, lung, and skeletal muscle, with lower levels in pancreas and liver.

In terms of biological role, may function as an early signal that helps mediate the activation of T-cells. This is Early lymphoid activation gene protein (DIAPH2-AS1) from Homo sapiens (Human).